The primary structure comprises 454 residues: Golgi reassembly-stacking protein 2 (454 aa).

Residue Gly2 is the site of N-myristoyl glycine attachment. PDZ GRASP-type domains lie at 15–105 and 111–199; these read EGYH…FCSF and NVWH…YGYL. Positions 15–215 are GRASP; the sequence is EGYHVLRVQE…PFEEGKKISL (201 aa). A dimethylated arginine mark is found at Arg30 and Arg47. The tract at residues 194–199 is important for membrane binding; sequence IGYGYL. Residue Ser214 is modified to Phosphoserine. Residue Thr222 is modified to Phosphothreonine. Thr225 carries the phosphothreonine; by MAPK modification. A disordered region spans residues 377–454; it reads EGSSAASAGE…VTDANASGAS (78 aa). Phosphoserine is present on Ser411. Thr435 is modified (phosphothreonine). Residues Ser443 and Ser451 each carry the phosphoserine modification.

This sequence belongs to the GORASP family. Homodimer. Homooligomer. ER stress induces phosphorylation-dependent monomerization. Interacts with BLZF1/Golgin 45. Identified in a complex with RAB2 and GORASP2. Interacts with JAM2 and JAM3. Interacts with members of the p24 cargo receptors. Interacts with CNIH1 and the cytoplasmic domain of transmembrane TGFA, prior its transit in the trans-Golgi. Interacts with KCTD5. Interacts with TMED2 and TMED3. Interacts with SEC16A in response to ER stress. Interacts (via PDZ GRASP-type 1 domain) with core-glycosylated CFTR in response to ER stress. Post-translationally, myristoylated. Myristoylation is essential for the Golgi targeting. In terms of processing, palmitoylated. Phosphorylated in mitotic cells. ER stress-induced phosphorylation at Ser-443 induces monomerization and subsequent relocalization from Golgi to ER which is essential for mediating unconventional (ER/Golgi-independent) trafficking of CFTR to the cell membrane. As to expression, detected in lung, brain, heart, liver and testis.

It is found in the golgi apparatus membrane. The protein resides in the endoplasmic reticulum membrane. The protein localises to the golgi apparatus. Its function is as follows. Key structural protein of the Golgi apparatus. The membrane cisternae of the Golgi apparatus adhere to each other to form stacks, which are aligned side by side to form the Golgi ribbon. Acting in concert with GORASP1/GRASP65, is required for the formation and maintenance of the Golgi ribbon, and may be dispensable for the formation of stacks. However, other studies suggest that GORASP2 plays a role in the assembly and membrane stacking of the Golgi cisternae, and in the process by which Golgi stacks reform after breakdown during mitosis and meiosis. May regulate the intracellular transport and presentation of a defined set of transmembrane proteins, such as transmembrane TGFA. Required for normal acrosome formation during spermiogenesis and normal male fertility, probably by promoting colocalization of JAM2 and JAM3 at contact sites between germ cells and Sertoli cells. Mediates ER stress-induced unconventional (ER/Golgi-independent) trafficking of core-glycosylated CFTR to cell membrane. This chain is Golgi reassembly-stacking protein 2 (Gorasp2), found in Rattus norvegicus (Rat).